The sequence spans 356 residues: Neutral protease 2 homolog UREG_03761 (356 aa).

The N-terminal stretch at 1 to 19 is a signal peptide; the sequence is MRFSSSFLSVLALASQALA. A propeptide spanning residues 20–181 is cleaved from the precursor; it reads FPLNDLPTTD…ALPEATLDKR (162 aa). 2 disulfide bridges follow: C189–C259 and C266–C284. H308 contacts Zn(2+). E309 is an active-site residue. Residues H312 and D323 each coordinate Zn(2+).

The protein belongs to the peptidase M35 family. Zn(2+) is required as a cofactor.

The protein localises to the secreted. The catalysed reaction is Preferential cleavage of bonds with hydrophobic residues in P1'. Also 3-Asn-|-Gln-4 and 8-Gly-|-Ser-9 bonds in insulin B chain.. In terms of biological role, secreted metalloproteinase that allows assimilation of proteinaceous substrates. Shows high activities on basic nuclear substrates such as histone and protamine. The sequence is that of Neutral protease 2 homolog UREG_03761 from Uncinocarpus reesii (strain UAMH 1704).